A 403-amino-acid polypeptide reads, in one-letter code: MKEIRQFTSESVSEGHPDKVADQISDVILDAILAQDRRARVACETLVKTGMVLVAGEITTQAHIDYEQIIRETITEIGYNHSEIGFDGATCAVVNAIGKQSSDIAQGVDRELEEDQGAGDQGMMFGYASDETDVLMPAPITYAHRLVQRQAEIRRNGELPWLRPDAKSQVTLLYEDDVPVAIDAIVLSTQHSPEISQATLREAVIETIIKPVLPADWFAHCRSENIHVNPTGNFIIGGPMGDCGLTGRKIIVDTYGGMARHGGGAFSGKDPSKVDRSAAYAGRYVAKNLVAAGLAERCEVQISYAIGVAEPTSVSVNTFGTGRIAESRLVELIQAHFDLRPVGLLQMLDLIRPIYRKTAAYGHFGREEPEFTWEQTDKAEALRDAAGLGPATAEIINVRSERH.

His16 contributes to the ATP binding site. Asp18 contacts Mg(2+). Glu44 lines the K(+) pocket. Residues Glu57 and Gln100 each coordinate L-methionine. A flexible loop region spans residues 100–110; the sequence is QSSDIAQGVDR. ATP is bound by residues 165–167, Asp242, 248–249, Ala265, and Lys269; these read DAK and RK. Asp242 contacts L-methionine. Residue Lys273 participates in L-methionine binding.

Belongs to the AdoMet synthase family. As to quaternary structure, homotetramer; dimer of dimers. Requires Mg(2+) as cofactor. The cofactor is K(+).

The protein localises to the cytoplasm. The enzyme catalyses L-methionine + ATP + H2O = S-adenosyl-L-methionine + phosphate + diphosphate. The protein operates within amino-acid biosynthesis; S-adenosyl-L-methionine biosynthesis; S-adenosyl-L-methionine from L-methionine: step 1/1. In terms of biological role, catalyzes the formation of S-adenosylmethionine (AdoMet) from methionine and ATP. The overall synthetic reaction is composed of two sequential steps, AdoMet formation and the subsequent tripolyphosphate hydrolysis which occurs prior to release of AdoMet from the enzyme. The chain is S-adenosylmethionine synthase from Nitrosococcus oceani (strain ATCC 19707 / BCRC 17464 / JCM 30415 / NCIMB 11848 / C-107).